The following is a 155-amino-acid chain: Ribosomal RNA large subunit methyltransferase H (155 aa).

S-adenosyl-L-methionine contacts are provided by residues Leu-72, Gly-103, and 122 to 127 (LSALTL).

It belongs to the RNA methyltransferase RlmH family. In terms of assembly, homodimer.

It localises to the cytoplasm. It carries out the reaction pseudouridine(1915) in 23S rRNA + S-adenosyl-L-methionine = N(3)-methylpseudouridine(1915) in 23S rRNA + S-adenosyl-L-homocysteine + H(+). Its function is as follows. Specifically methylates the pseudouridine at position 1915 (m3Psi1915) in 23S rRNA. This is Ribosomal RNA large subunit methyltransferase H from Escherichia fergusonii (strain ATCC 35469 / DSM 13698 / CCUG 18766 / IAM 14443 / JCM 21226 / LMG 7866 / NBRC 102419 / NCTC 12128 / CDC 0568-73).